Consider the following 354-residue polypeptide: Fructose-bisphosphate aldolase (354 aa).

Position 61 (S61) interacts with D-glyceraldehyde 3-phosphate. D104 (proton donor) is an active-site residue. H105, D139, E169, and H221 together coordinate Zn(2+). G222 serves as a coordination point for dihydroxyacetone phosphate. Residue H260 coordinates Zn(2+). Residues 261-263 and 282-285 contribute to the dihydroxyacetone phosphate site; these read GGS and NIDT.

The protein belongs to the class II fructose-bisphosphate aldolase family. As to quaternary structure, homodimer. Requires Zn(2+) as cofactor.

It catalyses the reaction beta-D-fructose 1,6-bisphosphate = D-glyceraldehyde 3-phosphate + dihydroxyacetone phosphate. It functions in the pathway carbohydrate degradation; glycolysis; D-glyceraldehyde 3-phosphate and glycerone phosphate from D-glucose: step 4/4. Catalyzes the aldol condensation of dihydroxyacetone phosphate (DHAP or glycerone-phosphate) with glyceraldehyde 3-phosphate (G3P) to form fructose 1,6-bisphosphate (FBP) in gluconeogenesis and the reverse reaction in glycolysis. This is Fructose-bisphosphate aldolase (fba) from Campylobacter jejuni subsp. jejuni serotype O:23/36 (strain 81-176).